The sequence spans 193 residues: Fe/S biogenesis protein NfuA (193 aa).

[4Fe-4S] cluster contacts are provided by Cys-149 and Cys-152.

The protein belongs to the NfuA family. As to quaternary structure, homodimer. [4Fe-4S] cluster is required as a cofactor.

Functionally, involved in iron-sulfur cluster biogenesis. Binds a 4Fe-4S cluster, can transfer this cluster to apoproteins, and thereby intervenes in the maturation of Fe/S proteins. Could also act as a scaffold/chaperone for damaged Fe/S proteins. The chain is Fe/S biogenesis protein NfuA from Psychromonas ingrahamii (strain DSM 17664 / CCUG 51855 / 37).